The following is a 76-amino-acid chain: MLQLVNDNGVVVNAILWLFVLFFVLVISITFVQLINLCFTCHRLCNNVVYKPVGKVYGVYKSYMRIQPLTSDIIQV.

Residues 1-14 (MLQLVNDNGVVVNA) lie on the Virion surface side of the membrane. The helical transmembrane segment at 15 to 35 (ILWLFVLFFVLVISITFVQLI) threads the bilayer. Residues 36–76 (NLCFTCHRLCNNVVYKPVGKVYGVYKSYMRIQPLTSDIIQV) are Intravirion-facing.

The protein belongs to the alphacoronaviruses E protein family. Homopentamer. Interacts with membrane protein M in the budding compartment of the host cell, which is located between endoplasmic reticulum and the Golgi complex. Interacts with Nucleoprotein.

It localises to the host Golgi apparatus membrane. Plays a central role in virus morphogenesis and assembly. Acts as a viroporin and self-assembles in host membranes forming pentameric protein-lipid pores that allow ion transport. Also plays a role in the induction of apoptosis. This is Envelope small membrane protein from Scotophilus kuhlii (Lesser asiatic yellow bat).